A 59-amino-acid polypeptide reads, in one-letter code: Protein translocase subunit SecE (59 aa).

The helical transmembrane segment at 37 to 57 (LIVLLFVGLLAFLVQLAFSIL) threads the bilayer.

It belongs to the SecE/SEC61-gamma family. As to quaternary structure, component of the Sec protein translocase complex. Heterotrimer consisting of SecY (alpha), SecG (beta) and SecE (gamma) subunits. The heterotrimers can form oligomers, although 1 heterotrimer is thought to be able to translocate proteins. Interacts with the ribosome. May interact with SecDF, and other proteins may be involved.

It is found in the cell membrane. Essential subunit of the Sec protein translocation channel SecYEG. Clamps together the 2 halves of SecY. May contact the channel plug during translocation. This is Protein translocase subunit SecE from Metallosphaera sedula (strain ATCC 51363 / DSM 5348 / JCM 9185 / NBRC 15509 / TH2).